Consider the following 104-residue polypeptide: ATP synthase subunit c (104 aa).

2 consecutive transmembrane segments (helical) span residues 37–57 (LLGAGVAIIGVAGAGIGQGAV) and 83–103 (AGIAESGAIYALVVAILLIFV).

Belongs to the ATPase C chain family. As to quaternary structure, F-type ATPases have 2 components, F(1) - the catalytic core - and F(0) - the membrane proton channel. F(1) has five subunits: alpha(3), beta(3), gamma(1), delta(1), epsilon(1). F(0) has three main subunits: a(1), b(2) and c(10-14). The alpha and beta chains form an alternating ring which encloses part of the gamma chain. F(1) is attached to F(0) by a central stalk formed by the gamma and epsilon chains, while a peripheral stalk is formed by the delta and b chains.

It is found in the cell membrane. Functionally, f(1)F(0) ATP synthase produces ATP from ADP in the presence of a proton or sodium gradient. F-type ATPases consist of two structural domains, F(1) containing the extramembraneous catalytic core and F(0) containing the membrane proton channel, linked together by a central stalk and a peripheral stalk. During catalysis, ATP synthesis in the catalytic domain of F(1) is coupled via a rotary mechanism of the central stalk subunits to proton translocation. Key component of the F(0) channel; it plays a direct role in translocation across the membrane. A homomeric c-ring of between 10-14 subunits forms the central stalk rotor element with the F(1) delta and epsilon subunits. This Mesoplasma florum (strain ATCC 33453 / NBRC 100688 / NCTC 11704 / L1) (Acholeplasma florum) protein is ATP synthase subunit c.